The chain runs to 1763 residues: Collagen alpha-2(IV) chain (1763 aa).

The N-terminal stretch at 1 to 26 (MSSRLRIPLWLLLPTTALVYFVTTVS) is a signal peptide. A 7S domain region spans residues 27 to 42 (TQITCRDCTNRGCFCV). The triple-helical region stretch occupies residues 43 to 1529 (GEKGSMGIPG…SGPPGPPGPS (1487 aa)). 2 disordered regions span residues 51 to 529 (PGPQ…PGPK) and 550 to 1529 (AGYA…PGPS). Low complexity predominate over residues 72 to 81 (PGPKGQKGSQ). Asparagine 126 carries an N-linked (GlcNAc...) asparagine glycan. Residues 135-152 (PGLPGPPGMPGFPGPPGV) are compositionally biased toward pro residues. Residues 190 to 199 (FPGEKGDRGD) show a composition bias toward basic and acidic residues. A compositionally biased stretch (pro residues) spans 206–217 (RGPPGEAGPPGN). Positions 225–235 (PKGDPGEQGPR) are enriched in low complexity. Alanine 249 carries an O-linked (Xyl...) (glycosaminoglycan) serine glycan. The segment covering 326–335 (DGLPGVPGLP) has biased composition (low complexity). A compositionally biased stretch (gly residues) spans 400 to 409 (GLPGGPGLPG). Low complexity-rich tracts occupy residues 410-419 (LPGLEGLPGP) and 428-453 (IPGA…PGPR). Basic and acidic residues predominate over residues 466–481 (KDGRPGLDGLPGRKGE). Residues 564-582 (LPGIPGATGAPGDDGLPGA) show a composition bias toward low complexity. Pro residues predominate over residues 583-592 (PGRPGPPGPP). 2 stretches are compositionally biased toward low complexity: residues 699-714 (DAGL…AVGP) and 731-783 (KDGL…PGIP). Residues 810–832 (PGLPGPKGEPGPSTTGPPGPPGF) show a composition bias toward pro residues. Composition is skewed to low complexity over residues 865–895 (EIGL…KEGP), 946–977 (FPGQ…PGQK), 1040–1051 (PGLPGQPGLRGP), 1077–1086 (LMGEKGLPGL), 1108–1146 (PGLK…QPGL), 1210–1231 (PGFP…PGPR), 1280–1296 (LPGL…PGLK), 1367–1386 (PAGL…PGFP), 1462–1480 (LPGL…FAGA), and 1499–1510 (PGLPGFPGIEGI). Residues 1511–1528 (PGPPGLPGPSGPPGPPGP) are compositionally biased toward pro residues. The Collagen IV NC1 domain occupies 1533–1756 (GFLLVKHSQT…SRCQVCIRSP (224 aa)). Cystine bridges form between cysteine 1548/cysteine 1637, cysteine 1581/cysteine 1634, cysteine 1593/cysteine 1599, cysteine 1656/cysteine 1752, cysteine 1690/cysteine 1749, and cysteine 1702/cysteine 1709.

This sequence belongs to the type IV collagen family. As to quaternary structure, trimers of two alpha 1(IV) and one alpha 2(IV) chain. Type IV collagen forms a mesh-like network linked through intermolecular interactions between 7S domains and between NC1 domains. Post-translationally, prolines at the third position of the tripeptide repeating unit (G-X-Y) are hydroxylated in some or all of the chains. Type IV collagens contain numerous cysteine residues which are involved in inter- and intramolecular disulfide bonding. 12 of these, located in the NC1 domain, are conserved in all known type IV collagens. In terms of processing, the trimeric structure of the NC1 domains is stabilized by covalent bonds between Lys and Met residues.

It is found in the secreted. The protein resides in the extracellular space. It localises to the extracellular matrix. Its subcellular location is the basement membrane. Functionally, collagen type IV is specific for basement membranes. The protein is Collagen alpha-2(IV) chain of Ascaris suum (Pig roundworm).